A 627-amino-acid polypeptide reads, in one-letter code: UvrABC system protein C (627 aa).

One can recognise a GIY-YIG domain in the interval 26 to 105; that stretch reads PEPGVYFMRD…IKQHQPYFNV (80 aa). The region spanning 215–250 is the UVR domain; that stretch reads QELIDILSEQMEKAAEALNFEVAARIRDQIAGLKSL.

This sequence belongs to the UvrC family. In terms of assembly, interacts with UvrB in an incision complex.

The protein localises to the cytoplasm. Its function is as follows. The UvrABC repair system catalyzes the recognition and processing of DNA lesions. UvrC both incises the 5' and 3' sides of the lesion. The N-terminal half is responsible for the 3' incision and the C-terminal half is responsible for the 5' incision. This is UvrABC system protein C from Nostoc sp. (strain PCC 7120 / SAG 25.82 / UTEX 2576).